The sequence spans 377 residues: Tyrosine-protein phosphatase 2 (377 aa).

The Tyrosine-protein phosphatase domain occupies 27 to 347 (IDKEFNFILQ…RFCYLAISEA (321 aa)). The segment at 77-137 (IDDDDDDEDD…EDHGGSGDEG (61 aa)) is disordered. Acidic residues predominate over residues 78-91 (DDDDDDEDDNEDDI). The segment covering 92–102 (IVSNNNNNNNN) has biased composition (low complexity). Residues 113–123 (GSSGQSDVMSN) are compositionally biased toward polar residues. Cys281 functions as the Phosphocysteine intermediate in the catalytic mechanism.

The protein belongs to the protein-tyrosine phosphatase family. Non-receptor class subfamily.

It catalyses the reaction O-phospho-L-tyrosyl-[protein] + H2O = L-tyrosyl-[protein] + phosphate. The chain is Tyrosine-protein phosphatase 2 (ptpB) from Dictyostelium discoideum (Social amoeba).